We begin with the raw amino-acid sequence, 92 residues long: Conotoxin Ac8.1 (92 aa).

The N-terminal stretch at 1-19 (LKMGAMFVLLLLFTLASSQ) is a signal peptide. Residues 20–44 (QEGDVQARKTSLKSDFYRALRQYDR) constitute a propeptide that is removed on maturation. The residue at position 45 (Gln-45) is a Pyrrolidone carboxylic acid.

Belongs to the conotoxin S superfamily. Contains 5 disulfide bonds. As to expression, expressed by the venom duct.

The protein localises to the secreted. The sequence is that of Conotoxin Ac8.1 from Conus achatinus (Little frog cone).